Here is a 362-residue protein sequence, read N- to C-terminus: Protein indeterminate-domain 16 (362 aa).

The interval methionine 1–aspartate 22 is disordered. 2 C2H2-type zinc fingers span residues tyrosine 39 to histidine 61 and tyrosine 82 to histidine 112. The segment at tryptophan 118–serine 142 adopts a CCHC-type 1; atypical zinc-finger fold. The Zn(2+) site is built by cysteine 120, cysteine 123, histidine 136, cysteine 140, cysteine 147, cysteine 149, histidine 162, and cysteine 166. The CCHC-type 2; atypical zinc finger occupies histidine 145–isoleucine 168. The segment at arginine 155–threonine 167 is SHR-binding. Residues serine 247–glutamate 278 are disordered. Residues arginine 251–glutamate 278 show a composition bias toward basic and acidic residues. Residues histidine 252–asparagine 319 adopt a coiled-coil conformation.

In terms of tissue distribution, highly expressed in leaves, hypocotyls, roots, vasculature of cotyledons, floral organs and in the endodermis and vasculaturenof inflorescence stems.

It is found in the nucleus. In terms of biological role, transcription factor regulating lateral organ morphogenesis and gravitropic responses. Has a redundant role with IDD14 in directing leaf and floral organ morphogenesis. Acts cooperatively with IDD15 to control silique and branche orientation. Involved in the establishment of auxin gradients through the regulation of auxin biosynthesis and transport. This Arabidopsis thaliana (Mouse-ear cress) protein is Protein indeterminate-domain 16.